Here is a 238-residue protein sequence, read N- to C-terminus: Zinc import ATP-binding protein ZnuC (238 aa).

The 216-residue stretch at 5-220 (ITLKNIHVSF…LEFISIFGLK (216 aa)) folds into the ABC transporter domain. 37–44 (GPNGAGKS) provides a ligand contact to ATP.

It belongs to the ABC transporter superfamily. Zinc importer (TC 3.A.1.15.5) family. In terms of assembly, the complex is composed of two ATP-binding proteins (ZnuC), two transmembrane proteins (ZnuB) and a solute-binding protein (ZnuA).

It localises to the cell inner membrane. It catalyses the reaction Zn(2+)(out) + ATP(in) + H2O(in) = Zn(2+)(in) + ADP(in) + phosphate(in) + H(+)(in). Its function is as follows. Part of the ABC transporter complex ZnuABC involved in zinc import. Responsible for energy coupling to the transport system. This is Zinc import ATP-binding protein ZnuC from Buchnera aphidicola subsp. Schizaphis graminum (strain Sg).